Here is a 287-residue protein sequence, read N- to C-terminus: Putative syntaxin-4 (287 aa).

The Cytoplasmic portion of the chain corresponds to 1–262 (MHQISGINAA…NRKWKIVTCI (262 aa)). The stretch at 65–97 (KCRKLNDHVDKFIAQARGIRRRLADASEELVQY) forms a coiled coil. The region spanning 184-246 (FDDMKNRATD…EQAQQNVRQA (63 aa)) is the t-SNARE coiled-coil homology domain. A helical; Anchor for type IV membrane protein transmembrane segment spans residues 263–283 (ALIVLLLVVVYLLSHFLGAII). Residues 284–287 (PGWK) are Extracellular-facing.

It belongs to the syntaxin family.

It localises to the membrane. Functionally, potentially involved in docking of synaptic vesicles at presynaptic active zones. The chain is Putative syntaxin-4 (syx-4) from Caenorhabditis elegans.